Reading from the N-terminus, the 865-residue chain is Protein translocase subunit SecA (865 aa).

Residues glutamine 93, 111–115, and aspartate 501 contribute to the ATP site; that span reads GEGKT. 4 residues coordinate Zn(2+): cysteine 841, cysteine 843, cysteine 852, and cysteine 853.

It belongs to the SecA family. In terms of assembly, monomer and homodimer. Part of the essential Sec protein translocation apparatus which comprises SecA, SecYEG and auxiliary proteins SecDF-YajC and YidC. It depends on Zn(2+) as a cofactor.

It localises to the cell inner membrane. It is found in the cytoplasm. The catalysed reaction is ATP + H2O + cellular proteinSide 1 = ADP + phosphate + cellular proteinSide 2.. Its function is as follows. Part of the Sec protein translocase complex. Interacts with the SecYEG preprotein conducting channel. Has a central role in coupling the hydrolysis of ATP to the transfer of proteins into and across the cell membrane, serving as an ATP-driven molecular motor driving the stepwise translocation of polypeptide chains across the membrane. The polypeptide is Protein translocase subunit SecA (Helicobacter acinonychis (strain Sheeba)).